The following is a 481-amino-acid chain: Keratin, type II cuticular Hb1 (481 aa).

The tract at residues 1 to 106 is head; the sequence is MTCGSGFCGR…PNAQCVKHEE (106 aa). The 312-residue stretch at 106-417 folds into the IF rod domain; that stretch reads EKEQIKCLNS…RLLEGEEQRL (312 aa). Residues 107 to 141 form a coil 1A region; the sequence is KEQIKCLNSKFAAFIDKVRFLEQQNKLLETKWQFY. Positions 142–151 are linker 1; the sequence is QNRKCCESNM. The segment at 152–252 is coil 1B; it reads EPLFEGYIEA…YDEETRILHS (101 aa). Residue K212 forms a Glycyl lysine isopeptide (Lys-Gly) (interchain with G-Cter in SUMO1) linkage. The tract at residues 253-269 is linker 12; it reads HISDTSIVVKMDNSRDL. Positions 270 to 413 are coil 2; sequence NMDCVVAEIK…TTYRRLLEGE (144 aa). The segment at 414-481 is tail; that stretch reads EQRLCEGVGA…GSAVSCGRKC (68 aa).

Belongs to the intermediate filament family. In terms of assembly, heterotetramer of two type I and two type II keratins. Expressed in dorsal skin.

The chain is Keratin, type II cuticular Hb1 from Mus musculus (Mouse).